We begin with the raw amino-acid sequence, 297 residues long: Acetylglutamate kinase (297 aa).

Substrate is bound by residues 70–71 (GG), arginine 92, and asparagine 194.

Belongs to the acetylglutamate kinase family. ArgB subfamily.

The protein resides in the cytoplasm. It carries out the reaction N-acetyl-L-glutamate + ATP = N-acetyl-L-glutamyl 5-phosphate + ADP. The protein operates within amino-acid biosynthesis; L-arginine biosynthesis; N(2)-acetyl-L-ornithine from L-glutamate: step 2/4. Functionally, catalyzes the ATP-dependent phosphorylation of N-acetyl-L-glutamate. This chain is Acetylglutamate kinase, found in Janthinobacterium sp. (strain Marseille) (Minibacterium massiliensis).